The chain runs to 400 residues: Acetate kinase (400 aa).

Position 10 (N10) interacts with Mg(2+). K17 is a binding site for ATP. Residue R91 coordinates substrate. Residue D148 is the Proton donor/acceptor of the active site. Residues 208 to 212 (HLGNG), 283 to 285 (DCR), and 331 to 335 (GIGEN) contribute to the ATP site. E385 is a Mg(2+) binding site.

Belongs to the acetokinase family. Homodimer. The cofactor is Mg(2+). Mn(2+) is required as a cofactor.

Its subcellular location is the cytoplasm. The enzyme catalyses acetate + ATP = acetyl phosphate + ADP. The protein operates within metabolic intermediate biosynthesis; acetyl-CoA biosynthesis; acetyl-CoA from acetate: step 1/2. Catalyzes the formation of acetyl phosphate from acetate and ATP. Can also catalyze the reverse reaction. The protein is Acetate kinase of Shewanella putrefaciens (strain CN-32 / ATCC BAA-453).